The sequence spans 361 residues: tRNA pseudouridine synthase D (361 aa).

Residue D76 is the Nucleophile of the active site. The TRUD domain maps to 151–318 (GIPNYFGYQR…EQGSRRLAWI (168 aa)).

It belongs to the pseudouridine synthase TruD family.

It carries out the reaction uridine(13) in tRNA = pseudouridine(13) in tRNA. Its function is as follows. Responsible for synthesis of pseudouridine from uracil-13 in transfer RNAs. This chain is tRNA pseudouridine synthase D, found in Wolinella succinogenes (strain ATCC 29543 / DSM 1740 / CCUG 13145 / JCM 31913 / LMG 7466 / NCTC 11488 / FDC 602W) (Vibrio succinogenes).